The primary structure comprises 372 residues: Cyanuric acid amidohydrolase (372 aa).

The segment at 1–105 is RU A; it reads MPTTLRRAHV…IVFEAREVDE (105 aa). Residues Arg-56 and 84-85 each bind substrate; that span reads SG. The segment at 115 to 252 is RU B; that stretch reads SLALGRARTP…HEIMVAGMSR (138 aa). Lys-165 is a catalytic residue. Substrate is bound by residues Arg-197 and 235–236; that span reads SG. Ser-235 serves as the catalytic Nucleophile. The segment at 258–372 is RU C; it reads LAIDHGVMRD…GPVAIIVERT (115 aa). Residue Glu-305 participates in Mg(2+) binding. Residues Arg-332 and 351 to 352 contribute to the substrate site; that span reads SG. 5 residues coordinate Mg(2+): Ala-354, Gln-357, Gly-358, Pro-359, and Gly-362.

This sequence belongs to the cyclic amide hydrolase (CyAH) family. As to quaternary structure, homotetramer.

The catalysed reaction is cyanurate + H2O = 1-carboxybiuret + H(+). Its pathway is xenobiotic degradation; atrazine degradation; biuret from cyanurate: step 1/1. Inhibited by barbituric acid. Responsible for the hydrolysis of cyanuric acid, an intermediate formed during catabolism of s-triazine based compounds in herbicides such as atrazine and polymers such as melamine. Catalyzes the hydrolytic opening of the s-triazine ring of cyanuric acid (2,4,6-trihydroxy-s-triazine) to yield carbon dioxide and carboxybiuret, which spontaneously decarboxylates to biuret. The sequence is that of Cyanuric acid amidohydrolase from Bradyrhizobium sp. (strain ORS 375).